Reading from the N-terminus, the 165-residue chain is Putative pre-16S rRNA nuclease (165 aa).

It belongs to the YqgF nuclease family.

It localises to the cytoplasm. Functionally, could be a nuclease involved in processing of the 5'-end of pre-16S rRNA. The sequence is that of Putative pre-16S rRNA nuclease from Rhizobium meliloti (strain 1021) (Ensifer meliloti).